Consider the following 92-residue polypeptide: Progonadoliberin-1 (92 aa).

Positions 1-23 are cleaved as a signal peptide; it reads MGLIPKLLAGLVLLTLCVENGSG. Glutamine 24 carries the pyrrolidone carboxylic acid modification. Glycine 33 bears the Glycine amide mark.

It belongs to the GnRH family. In terms of processing, the precursor is cleaved by ACE, which removes the Gly-Lys-Arg peptide at the C-terminus, leading to mature hormone. The mature form of Gonadoliberin-1 is also cleaved and degraded by ACE.

Its subcellular location is the secreted. Its function is as follows. Stimulates the secretion of gonadotropins; it stimulates the secretion of both luteinizing and follicle-stimulating hormones. This Cavia porcellus (Guinea pig) protein is Progonadoliberin-1 (GNRH1).